A 223-amino-acid polypeptide reads, in one-letter code: Endonuclease NucS (223 aa).

Belongs to the NucS endonuclease family.

It is found in the cytoplasm. Its function is as follows. Cleaves both 3' and 5' ssDNA extremities of branched DNA structures. This Mycolicibacterium vanbaalenii (strain DSM 7251 / JCM 13017 / BCRC 16820 / KCTC 9966 / NRRL B-24157 / PYR-1) (Mycobacterium vanbaalenii) protein is Endonuclease NucS.